A 206-amino-acid polypeptide reads, in one-letter code: Ribosomal RNA small subunit methyltransferase G (206 aa).

Residues Gly73, Leu78, Val124–Glu125, and Arg139 contribute to the S-adenosyl-L-methionine site.

It belongs to the methyltransferase superfamily. RNA methyltransferase RsmG family.

It localises to the cytoplasm. It carries out the reaction guanosine(527) in 16S rRNA + S-adenosyl-L-methionine = N(7)-methylguanosine(527) in 16S rRNA + S-adenosyl-L-homocysteine. Specifically methylates the N7 position of guanine in position 527 of 16S rRNA. The chain is Ribosomal RNA small subunit methyltransferase G from Yersinia pseudotuberculosis serotype O:3 (strain YPIII).